The sequence spans 91 residues: MARVTVQDAVEKIGNRFDLVLVAARRARQLQTGGKDPLVAEENDKVTVIALREVEEGLINGKILDVRERQEQQEQEAAEMQAVSAIAESRR.

It belongs to the RNA polymerase subunit omega family. The RNAP catalytic core consists of 2 alpha, 1 beta, 1 beta' and 1 omega subunit. When a sigma factor is associated with the core the holoenzyme is formed, which can initiate transcription.

The catalysed reaction is RNA(n) + a ribonucleoside 5'-triphosphate = RNA(n+1) + diphosphate. Functionally, promotes RNA polymerase assembly. Latches the N- and C-terminal regions of the beta' subunit thereby facilitating its interaction with the beta and alpha subunits. The sequence is that of DNA-directed RNA polymerase subunit omega from Photorhabdus laumondii subsp. laumondii (strain DSM 15139 / CIP 105565 / TT01) (Photorhabdus luminescens subsp. laumondii).